A 362-amino-acid polypeptide reads, in one-letter code: Serine/threonine-protein kinase SRK2E (362 aa).

4 positions are modified to phosphoserine; by autocatalysis: S7, S18, S29, and S43. A Protein kinase domain is found at 21 to 277; the sequence is YELVKDIGSG…IPEIRNHEWF (257 aa). 27–35 contacts ATP; it reads IGSGNFGVA. K50 is a binding site for ATP. The active-site Proton acceptor is the D140. Positions 160-186 are activation loop; the sequence is DFGYSKSSVLHSQPKSTVGTPAYIAPE. Position 175 is a phosphoserine (S175). The segment at 283–318 is domain I; osmotic stress response, required for the kinase activity; sequence ADLMNDNTMTTQFDESDQPGQSIEEIMQIIAEATVP. The interval 319-362 is domain II; ABA response and ABI1 binding; that stretch reads PAGTQNLNHYLTGSLDIDDDMEEDLESDLDDLDIDSSGEIVYAM.

This sequence belongs to the protein kinase superfamily. Ser/Thr protein kinase family. Interacts with ABI1, PP2CA and SLAC1. Interacts with B'ALPHA, B'BETA, B'DELTA, PP2AA2, PP2AA3, PP2A1 and PP2A2. Associates with MAPKKK18 within the nucleus. Interacts with I-2, TOPP1 and TOPP2. Interacts with ABI2. Post-translationally, autophosphorylation on residues Ser-7, Ser-18, Ser-29, Ser-43, Ser-175 and/or Thr-176. Only the phosphorylation of Ser-175 is crucial for the kinase activity. The phosphorylation of Ser-43 may repress the ABA signaling pathway in absence of ABA. Expressed in seedlings, leaves, flowers, stems, and roots, but restricted to guard cells and vascular tissue.

The protein resides in the nucleus. The catalysed reaction is L-seryl-[protein] + ATP = O-phospho-L-seryl-[protein] + ADP + H(+). The enzyme catalyses L-threonyl-[protein] + ATP = O-phospho-L-threonyl-[protein] + ADP + H(+). Kinase activity enhanced by ABA and low humidity. Repressed by PP2CA independently of its phosphatase activity. Probably inactivated by ABI1. Repressed by TOPP1. Negatively regulated by ABI2. Functionally, activator of the abscisic acid (ABA) signaling pathway that regulates numerous ABA responses, such as stomata closure in response to drought, darkness, high CO(2), plant pathogens, or decreases in atmospheric relative humidity (RH). Involved in the resistance to drought by avoiding water loss. Required for the stomata closure mediated by pathogen-associated molecular pattern (PAMPs) (e.g. flg22 and LPS) of pathogenic bacteria such as P.syringae pv. tomato (Pst) and E.coli O157:H7. As a plant defense process, stomata are closed transiently in order to limit invaders, but actively reopened by bacteria after a few hours; virulent strains (e.g. Pst DC3000) are more efficient than avirulent strains (e.g. Pst DC3000 AvrRpt2) in reopening stomata. Mediates the phosphorylation and activation of the S-type anion efflux channel SLAC1, and thus promotes stomata closure. Essential for stomatal closure in response to reactive oxygen species (ROS). Promotes MAPKKK18 activity upon abscisic acid (ABA) treatment. The protein is Serine/threonine-protein kinase SRK2E of Arabidopsis thaliana (Mouse-ear cress).